A 580-amino-acid polypeptide reads, in one-letter code: NADH-quinone oxidoreductase subunit C/D (580 aa).

The interval 1–171 (MSLDQAIPEA…PPFVLTDRLF (171 aa)) is NADH dehydrogenase I subunit C. The segment at 195-580 (ELMVLNFGPH…IDFVMSDVDR (386 aa)) is NADH dehydrogenase I subunit D.

The protein in the N-terminal section; belongs to the complex I 30 kDa subunit family. This sequence in the C-terminal section; belongs to the complex I 49 kDa subunit family. As to quaternary structure, NDH-1 is composed of 13 different subunits. Subunits NuoB, CD, E, F, and G constitute the peripheral sector of the complex.

Its subcellular location is the cell inner membrane. The catalysed reaction is a quinone + NADH + 5 H(+)(in) = a quinol + NAD(+) + 4 H(+)(out). Its function is as follows. NDH-1 shuttles electrons from NADH, via FMN and iron-sulfur (Fe-S) centers, to quinones in the respiratory chain. The immediate electron acceptor for the enzyme in this species is believed to be ubiquinone. Couples the redox reaction to proton translocation (for every two electrons transferred, four hydrogen ions are translocated across the cytoplasmic membrane), and thus conserves the redox energy in a proton gradient. This chain is NADH-quinone oxidoreductase subunit C/D, found in Cereibacter sphaeroides (strain KD131 / KCTC 12085) (Rhodobacter sphaeroides).